The chain runs to 265 residues: Putative methyltransferase 235L (265 aa).

The signal sequence occupies residues 1–17 (MDICICYFFTILTTISC).

This sequence belongs to the methyltransferase superfamily.

The protein is Putative methyltransferase 235L of Acheta domesticus (House cricket).